Reading from the N-terminus, the 261-residue chain is Cytosolic Fe-S cluster assembly factor Nubp2 homolog (261 aa).

14-21 is a binding site for ATP; the sequence is GKGGVGKS. Cysteine 188 and cysteine 191 together coordinate [4Fe-4S] cluster.

The protein belongs to the Mrp/NBP35 ATP-binding proteins family. NUBP2/CFD1 subfamily. In terms of assembly, heterotetramer of 2 Nubp1 and 2 Nubp2 chains. It depends on [4Fe-4S] cluster as a cofactor.

The protein localises to the cytoplasm. In terms of biological role, component of the cytosolic iron-sulfur (Fe/S) protein assembly (CIA) machinery. Required for maturation of extramitochondrial Fe-S proteins. The Nubp1-Nubp2 heterotetramer forms a Fe-S scaffold complex, mediating the de novo assembly of an Fe-S cluster and its transfer to target apoproteins. The chain is Cytosolic Fe-S cluster assembly factor Nubp2 homolog from Drosophila willistoni (Fruit fly).